The primary structure comprises 530 residues: Glutamate--cysteine ligase (530 aa).

It belongs to the glutamate--cysteine ligase type 1 family. Type 1 subfamily.

The catalysed reaction is L-cysteine + L-glutamate + ATP = gamma-L-glutamyl-L-cysteine + ADP + phosphate + H(+). It functions in the pathway sulfur metabolism; glutathione biosynthesis; glutathione from L-cysteine and L-glutamate: step 1/2. The chain is Glutamate--cysteine ligase from Pseudomonas entomophila (strain L48).